We begin with the raw amino-acid sequence, 606 residues long: Albumin A (606 aa).

A signal peptide spans methionine 1–serine 18. A propeptide spanning residues arginine 19–arginine 24 is cleaved from the precursor. 3 consecutive Albumin domains span residues phenylalanine 22–lysine 211, histidine 212–asparagine 401, and glutamate 402–glutamate 599. Cu cation is bound at residue histidine 30. 17 cysteine pairs are disulfide-bonded: cysteine 80-cysteine 89, cysteine 102-cysteine 118, cysteine 117-cysteine 128, cysteine 148-cysteine 193, cysteine 192-cysteine 201, cysteine 224-cysteine 270, cysteine 269-cysteine 277, cysteine 289-cysteine 303, cysteine 302-cysteine 313, cysteine 340-cysteine 383, cysteine 382-cysteine 391, cysteine 414-cysteine 460, cysteine 459-cysteine 470, cysteine 483-cysteine 499, cysteine 498-cysteine 509, cysteine 536-cysteine 581, and cysteine 580-cysteine 589.

Belongs to the ALB/AFP/VDB family. In terms of tissue distribution, plasma.

The protein localises to the secreted. Its function is as follows. Binds water, Ca(2+), Na(+), K(+), fatty acids, hormones, bilirubin and drugs. Its main function is the regulation of the colloidal osmotic pressure of blood. The polypeptide is Albumin A (alb-a) (Xenopus laevis (African clawed frog)).